Consider the following 431-residue polypeptide: Putative transcription factor R429 (431 aa).

Positions 28–95 form a coiled coil; that stretch reads NKFENMSKAL…SIENCSESLD (68 aa). The disordered stretch occupies residues 142-187; that stretch reads SQQENSSESNNDIVKNGTGGSTSKRKKIQPSNRCSGSKTGKVTETK. A compositionally biased stretch (low complexity) spans 143–152; it reads QQENSSESNN. A compositionally biased stretch (polar residues) spans 170 to 181; it reads QPSNRCSGSKTG. A zinc finger spans residues 218–241; it reads CSVPDCDGEKILNQNDGYMVCKKC.

It belongs to the nucleo-cytoplasmic large DNA viruses (NCLDVs) VLTF-3 family.

Functionally, putative transcription factor. The protein is Putative transcription factor R429 of Acanthamoeba polyphaga (Amoeba).